The following is a 242-amino-acid chain: Floral homeotic protein AGAMOUS (242 aa).

Residues 19–73 (RGKIEIKRIENTTNRQVTFCKRRNGLLKKAYELSVLCDAEVALIVFSSRGRLYEY) enclose the MADS-box domain. A K-box domain is found at 103–193 (AQYYQQEASK…RAKIAETERS (91 aa)).

As to expression, expressed exclusively in stamens and carpels.

It localises to the nucleus. In terms of biological role, probable transcription factor involved in regulating genes that determines stamen and carpel development in wild-type flowers. The sequence is that of Floral homeotic protein AGAMOUS (AG1) from Petunia hybrida (Petunia).